A 173-amino-acid polypeptide reads, in one-letter code: MQSIVLILILQLVYVPFLTLRTIFLVKNITFLAAIFGMLEMLVYVFGLSLVFSGKQSMLAMVVYAVGFGLGIFLGAKIERKLAIGYVYTTINTQNKNEELVRFLRNEGFAVTIYVGEGRDSNRYKYEILTKRNRETELFQIVEQFEPNAFIISYEPKSFKGGFLLARMKAKQK.

The next 3 helical transmembrane spans lie at 4–24 (IVLI…RTIF), 31–51 (FLAA…LSLV), and 58–78 (MLAM…GAKI).

Belongs to the UPF0316 family.

It localises to the cell membrane. The protein is UPF0316 protein Bsph_0745 of Lysinibacillus sphaericus (strain C3-41).